Consider the following 301-residue polypeptide: Protein translocase subunit SecF (301 aa).

Helical transmembrane passes span 17–37 (YIAL…IFQI), 137–157 (DALF…AIRF), 163–183 (IGAT…FYIL), 190–210 (IFIS…VVVF), 239–261 (LSRT…FFGG), and 272–292 (ILGI…VVLL).

The protein belongs to the SecD/SecF family. SecF subfamily. In terms of assembly, forms a complex with SecD. Part of the essential Sec protein translocation apparatus which comprises SecA, SecYEG and auxiliary proteins SecDF. Other proteins may also be involved.

Its subcellular location is the cell inner membrane. Functionally, part of the Sec protein translocase complex. Interacts with the SecYEG preprotein conducting channel. SecDF uses the proton motive force (PMF) to complete protein translocation after the ATP-dependent function of SecA. This chain is Protein translocase subunit SecF, found in Thermodesulfovibrio yellowstonii (strain ATCC 51303 / DSM 11347 / YP87).